We begin with the raw amino-acid sequence, 316 residues long: Protease HtpX homolog (316 aa).

A helical membrane pass occupies residues 16 to 36 (LFMGAGFLIGGATGMMIALVF). A Zn(2+)-binding site is contributed by His134. Glu135 is a catalytic residue. Zn(2+) is bound at residue His138. 2 consecutive transmembrane segments (helical) span residues 149-169 (VTAT…FFGG) and 180-200 (LGGM…AMLV). Position 209 (Glu209) interacts with Zn(2+). A disordered region spans residues 295-316 (PVMAATTSSSVPLSGERGGPWS).

It belongs to the peptidase M48B family. Zn(2+) is required as a cofactor.

It localises to the cell inner membrane. This Caulobacter vibrioides (strain ATCC 19089 / CIP 103742 / CB 15) (Caulobacter crescentus) protein is Protease HtpX homolog.